The chain runs to 295 residues: MIKVQREAEPAVLNLTDSDSIGFKELEAAKKTTFTKDTKFPFEAYKDESVKNLLKKMFNGKCGYCESIINVTSYEEIEHFRPKKAINIEGIQGLTYPGYYWLAMSWNNLLISCQRCNRSHKKNYFPIENESNRAKAPGEESGEEVLLLNPCEDDPSEHLEFKDTGIIEFKEGSKKGEKSIKVYALHRRELTEERAKVAKDIELKKVQILDGLSTLKVLLRYQEDSDLQKEIEKTVSNIISLYDFIFEYENDPNRPYQAMVTQITSDFLSERKELINKLKTTSNRKNSCEQSHISS.

Its function is as follows. Component of antiviral defense system Septu type II, composed of PtuA and PtuB. Expression of Septu type II in B.subtilis (strain BEST7003) confers resistance to phages SBSphiC and SpBeta. May be a nuclease. The polypeptide is Septu protein PtuB (Bacillus mycoides (strain KBAB4) (Bacillus weihenstephanensis)).